We begin with the raw amino-acid sequence, 447 residues long: ATP-dependent protease ATPase subunit HslU (447 aa).

Residues isoleucine 17, glycine 59–glutamate 64, aspartate 256, glutamate 321, and arginine 393 each bind ATP.

Belongs to the ClpX chaperone family. HslU subfamily. In terms of assembly, a double ring-shaped homohexamer of HslV is capped on each side by a ring-shaped HslU homohexamer. The assembly of the HslU/HslV complex is dependent on binding of ATP.

The protein resides in the cytoplasm. Its function is as follows. ATPase subunit of a proteasome-like degradation complex; this subunit has chaperone activity. The binding of ATP and its subsequent hydrolysis by HslU are essential for unfolding of protein substrates subsequently hydrolyzed by HslV. HslU recognizes the N-terminal part of its protein substrates and unfolds these before they are guided to HslV for hydrolysis. The chain is ATP-dependent protease ATPase subunit HslU from Pseudomonas putida (strain ATCC 47054 / DSM 6125 / CFBP 8728 / NCIMB 11950 / KT2440).